A 294-amino-acid chain; its full sequence is Elongation factor Ts (294 aa).

An involved in Mg(2+) ion dislocation from EF-Tu region spans residues 80–83 (TDFV).

This sequence belongs to the EF-Ts family.

It localises to the cytoplasm. Associates with the EF-Tu.GDP complex and induces the exchange of GDP to GTP. It remains bound to the aminoacyl-tRNA.EF-Tu.GTP complex up to the GTP hydrolysis stage on the ribosome. The protein is Elongation factor Ts of Polynucleobacter asymbioticus (strain DSM 18221 / CIP 109841 / QLW-P1DMWA-1) (Polynucleobacter necessarius subsp. asymbioticus).